We begin with the raw amino-acid sequence, 167 residues long: Shikimate kinase (167 aa).

An ATP-binding site is contributed by G8 to T15.

Belongs to the shikimate kinase family.

The protein localises to the cytoplasm. It carries out the reaction shikimate + ATP = 3-phosphoshikimate + ADP + H(+). It participates in metabolic intermediate biosynthesis; chorismate biosynthesis; chorismate from D-erythrose 4-phosphate and phosphoenolpyruvate: step 5/7. The chain is Shikimate kinase from Helicobacter hepaticus (strain ATCC 51449 / 3B1).